A 495-amino-acid chain; its full sequence is Probable leucine aminopeptidase 2 (495 aa).

Residues 1 to 21 form the signal peptide; the sequence is MKSQLLSLAVAVTTISQGVVG. The region spanning 130–216 is the PA domain; sequence MAELVVAKNN…SQEDGKNLAT (87 aa). 2 N-linked (GlcNAc...) asparagine glycosylation sites follow: N142 and N235. Zn(2+) contacts are provided by H259 and D271. A glycan (N-linked (GlcNAc...) asparagine) is linked at N272. The active-site Proton acceptor is the E303. The Zn(2+) site is built by E304 and D332. A glycan (N-linked (GlcNAc...) asparagine) is linked at N352. H430 is a Zn(2+) binding site.

The protein belongs to the peptidase M28 family. M28A subfamily. As to quaternary structure, monomer. Requires Zn(2+) as cofactor.

Its subcellular location is the secreted. Functionally, extracellular aminopeptidase that releases a wide variety of amino acids from natural peptides and contributes to pathogenicity. The protein is Probable leucine aminopeptidase 2 (LAP2) of Arthroderma benhamiae (strain ATCC MYA-4681 / CBS 112371) (Trichophyton mentagrophytes).